The chain runs to 187 residues: Cell division protein SepF (187 aa).

This sequence belongs to the SepF family. In terms of assembly, homodimer. Interacts with FtsZ.

The protein localises to the cytoplasm. Its function is as follows. Cell division protein that is part of the divisome complex and is recruited early to the Z-ring. Probably stimulates Z-ring formation, perhaps through the cross-linking of FtsZ protofilaments. Its function overlaps with FtsA. The chain is Cell division protein SepF from Streptococcus suis (strain 98HAH33).